We begin with the raw amino-acid sequence, 860 residues long: Leucine--tRNA ligase (860 aa).

Residues 42–52 carry the 'HIGH' region motif; that stretch reads PYPSGRLHMGH. Positions 619-623 match the 'KMSKS' region motif; sequence KMSKS. Lysine 622 is a binding site for ATP.

Belongs to the class-I aminoacyl-tRNA synthetase family.

The protein localises to the cytoplasm. It carries out the reaction tRNA(Leu) + L-leucine + ATP = L-leucyl-tRNA(Leu) + AMP + diphosphate. This Salmonella paratyphi A (strain ATCC 9150 / SARB42) protein is Leucine--tRNA ligase.